The primary structure comprises 356 residues: Alanine racemase, catabolic (356 aa).

The active-site Proton acceptor; specific for D-alanine is the Lys35. The residue at position 35 (Lys35) is an N6-(pyridoxal phosphate)lysine. Arg130 provides a ligand contact to substrate. The active-site Proton acceptor; specific for L-alanine is Tyr253. Met301 contacts substrate.

The protein belongs to the alanine racemase family. It depends on pyridoxal 5'-phosphate as a cofactor.

The enzyme catalyses L-alanine = D-alanine. Functionally, isomerizes L-alanine to D-alanine which is then oxidized to pyruvate by DadA. This chain is Alanine racemase, catabolic (dadX), found in Escherichia coli O6:H1 (strain CFT073 / ATCC 700928 / UPEC).